A 415-amino-acid chain; its full sequence is Corticotropin-releasing factor receptor 1 (415 aa).

An N-terminal signal peptide occupies residues 1-23; the sequence is MGRRPQLRLVKALLLLGLNSISA. Residues 24–111 are Extracellular-facing; that stretch reads SLQDQHCESL…CQEILSEGEK (88 aa). 3 cysteine pairs are disulfide-bonded: Cys30–Cys54, Cys44–Cys87, and Cys68–Cys102. Asn38, Asn45, Asn51, Asn78, Asn90, and Asn98 each carry an N-linked (GlcNAc...) asparagine glycan. The important for peptide agonist binding stretch occupies residues 99–108; the sequence is HSECQEILSE. Residues 112–142 traverse the membrane as a helical segment; sequence SKAHYHIAVIINYLGHCISLAALLVAFVLFL. The Cytoplasmic portion of the chain corresponds to 143–149; the sequence is RLRSIRC. Residues 150–174 form a helical membrane-spanning segment; sequence VRNIIHWNLISAFILRNATWFVVQL. At 175-189 the chain is on the extracellular side; sequence TMSPEVHQSNVGWCR. An intrachain disulfide couples Cys188 to Cys258. A helical transmembrane segment spans residues 190–218; it reads LVTAAYNYFHVTNFFWMFGEGCYLHTAVV. Topologically, residues 219-225 are cytoplasmic; the sequence is LTYSTDR. Residues 226–253 form a helical membrane-spanning segment; sequence LRKWMFICIGWGVPFPIIVAWAIGKLYY. Over 254–269 the chain is Extracellular; that stretch reads DNEKCWFGKRPGVYTD. Residues 270-295 form a helical membrane-spanning segment; that stretch reads YIYQGPMILVLLINFIFLFNIVRILM. Residues 280–290 form an important for antagonist binding region; the sequence is LLINFIFLFNI. Topologically, residues 296-306 are cytoplasmic; sequence TKLRASTTSET. Residue Ser301 is modified to Phosphoserine; by PKA. The helical transmembrane segment at 307 to 331 threads the bilayer; sequence IQYRKAVKATLVLLPLLGITYMLFF. Residues 332 to 338 are Extracellular-facing; the sequence is VNPGEDE. The chain crosses the membrane as a helical span at residues 339-368; sequence VSRVVFIYFNSFLESFQGFFVSVFYCFLNS. At 369 to 415 the chain is on the cytoplasmic side; sequence EVRSAIRKRWHRWQDKHSIRARVARAMSIPTSPTRVSFHSIKQSTAV.

Belongs to the G-protein coupled receptor 2 family. Heterodimer; heterodimerizes with GPER1. Interacts (via N-terminal extracellular domain) with CRH and UCN. Interacts with DLG1; this inhibits endocytosis of CRHR1 after agonist binding. Post-translationally, C-terminal Ser or Thr residues may be phosphorylated. Phosphorylation at Ser-301 by PKA prevents maximal coupling to Gq-protein, and thereby negatively regulates downstream signaling.

The protein resides in the cell membrane. It is found in the endosome. In terms of biological role, G-protein coupled receptor for CRH (corticotropin-releasing factor) and UCN (urocortin). Has high affinity for CRH and UCN. Ligand binding causes a conformation change that triggers signaling via guanine nucleotide-binding proteins (G proteins) and down-stream effectors, such as adenylate cyclase. Promotes the activation of adenylate cyclase, leading to increased intracellular cAMP levels. Inhibits the activity of the calcium channel CACNA1H. Required for normal embryonic development of the adrenal gland and for normal hormonal responses to stress. Plays a role in the response to anxiogenic stimuli. The polypeptide is Corticotropin-releasing factor receptor 1 (CRHR1) (Ovis aries (Sheep)).